A 258-amino-acid polypeptide reads, in one-letter code: HTH-type transcriptional repressor GlcR (258 aa).

The region spanning 3 to 58 (QEERLVAILDFLKQHNRITTEQICTLLQVSRDTARRDLVKLEEQNAIIRTRGGAIL) is the HTH deoR-type domain. A DNA-binding region (H-T-H motif) is located at residues 20-39 (ITTEQICTLLQVSRDTARRD).

Its function is as follows. Plays a role in carbon catabolite repression (CCR). Specifically required for transcriptional repression of the levanase operon by glucose but not by other sugars. The chain is HTH-type transcriptional repressor GlcR (glcR) from Bacillus subtilis (strain 168).